The sequence spans 135 residues: UPF0216 protein MTH_949 (135 aa).

The protein belongs to the UPF0216 family.

This chain is UPF0216 protein MTH_949, found in Methanothermobacter thermautotrophicus (strain ATCC 29096 / DSM 1053 / JCM 10044 / NBRC 100330 / Delta H) (Methanobacterium thermoautotrophicum).